The sequence spans 254 residues: NAD-dependent protein deacylase (254 aa).

The region spanning 1 to 250 is the Deacetylase sirtuin-type domain; sequence MERLEEARKR…LPPSPEDQAE (250 aa). 22-41 contacts NAD(+); it reads GAGISKPSGIPTFRDAEGLW. Substrate is bound by residues tyrosine 66 and arginine 69. Residue 104–107 coordinates NAD(+); it reads QNVD. The active-site Proton acceptor is the histidine 122. 4 residues coordinate Zn(2+): cysteine 130, cysteine 133, cysteine 149, and cysteine 152. NAD(+)-binding positions include 189–191, 215–217, and alanine 233; these read GTS and NPE.

This sequence belongs to the sirtuin family. Class III subfamily. It depends on Zn(2+) as a cofactor.

The protein resides in the cytoplasm. It catalyses the reaction N(6)-acetyl-L-lysyl-[protein] + NAD(+) + H2O = 2''-O-acetyl-ADP-D-ribose + nicotinamide + L-lysyl-[protein]. It carries out the reaction N(6)-succinyl-L-lysyl-[protein] + NAD(+) + H2O = 2''-O-succinyl-ADP-D-ribose + nicotinamide + L-lysyl-[protein]. NAD-dependent lysine deacetylase and desuccinylase that specifically removes acetyl and succinyl groups on target proteins. Modulates the activities of several proteins which are inactive in their acylated form. In Thermus thermophilus (strain ATCC BAA-163 / DSM 7039 / HB27), this protein is NAD-dependent protein deacylase.